We begin with the raw amino-acid sequence, 116 residues long: MSQQIIEEIERRYMKQDVPEFRVGDTVRVGVRVVEGNRERVQEFEGVVIRKRGSGLNENFTVRRIASHGIGVERTFLVHAPRVESIQVVRRGKVRRARLFYLRGLTGKAARIKERR.

The protein belongs to the bacterial ribosomal protein bL19 family.

This protein is located at the 30S-50S ribosomal subunit interface and may play a role in the structure and function of the aminoacyl-tRNA binding site. This Roseiflexus castenholzii (strain DSM 13941 / HLO8) protein is Large ribosomal subunit protein bL19.